The sequence spans 387 residues: tRNA pseudouridine synthase B (387 aa).

The active-site Nucleophile is the D43.

It belongs to the pseudouridine synthase TruB family. Type 1 subfamily.

The enzyme catalyses uridine(55) in tRNA = pseudouridine(55) in tRNA. Functionally, responsible for synthesis of pseudouridine from uracil-55 in the psi GC loop of transfer RNAs. This Bifidobacterium longum (strain DJO10A) protein is tRNA pseudouridine synthase B.